The chain runs to 72 residues: uncharacterized protein (72 aa).

A run of 2 helical transmembrane segments spans residues 15–35 (WEIL…IGSI) and 50–70 (ILIY…MYFI).

The protein localises to the host membrane. This is an uncharacterized protein from Spiroplasma melliferum (SpV1).